A 397-amino-acid chain; its full sequence is Elongation factor Tu-1 (397 aa).

The 197-residue stretch at 10-206 folds into the tr-type G domain; that stretch reads KPHVNIGTIG…AVDESIPEPE (197 aa). Residues 19 to 26 are G1; sequence GHIDHGKT. 19–26 serves as a coordination point for GTP; sequence GHIDHGKT. Mg(2+) is bound at residue Thr-26. Residues 62 to 66 are G2; the sequence is GITIS. The segment at 83–86 is G3; it reads DCPG. Residues 83-87 and 138-141 each bind GTP; these read DCPGH and NKAD. The segment at 138 to 141 is G4; it reads NKAD. The segment at 176–178 is G5; sequence SAL.

The protein belongs to the TRAFAC class translation factor GTPase superfamily. Classic translation factor GTPase family. EF-Tu/EF-1A subfamily. Monomer.

It localises to the cytoplasm. It carries out the reaction GTP + H2O = GDP + phosphate + H(+). Its function is as follows. GTP hydrolase that promotes the GTP-dependent binding of aminoacyl-tRNA to the A-site of ribosomes during protein biosynthesis. The sequence is that of Elongation factor Tu-1 from Streptomyces ramocissimus.